The sequence spans 706 residues: Forkhead box protein P2 (706 aa).

A compositionally biased stretch (polar residues) spans 1–28 (MMQESATETISNSSMNQNGMSTLSSQLD). 2 disordered regions span residues 1 to 45 (MMQE…SEVS) and 275 to 305 (IKHGGLDLTTNISSSTTSTTTSKASPPITHH). Over residues 287–296 (SSSTTSTTTS) the composition is skewed to low complexity. Residues 337-362 (GVCKWPGCENICEDFGQFLKHLNNEH) form a C2H2-type zinc finger. The leucine-zipper stretch occupies residues 379-400 (VQQLEIQLSKERERLQAMMTHL). Residues 413-417 (PLNLV) are ctbp1-binding. The segment at residues 495–585 (RPPFTYATLI…SQKITASPTL (91 aa)) is a DNA-binding region (fork-head). The disordered stretch occupies residues 672–706 (DDEDCPMSLVTTANHSPELEEDRELEEEPLSEDLE). Acidic residues predominate over residues 690-706 (LEEDRELEEEPLSEDLE).

In terms of assembly, dimerization is required for DNA-binding. At stage 15, expressed in the anterior/superior eye field and the caudal branchial arch. At later stages, expression persists in the retina and in the caudal branchial arch. Expressed in the pronephros and the tip of the tail. Beginning with stage 35, expression in the brain is localized to distinct subdomains of the anterior prosencephalon, the medial mesencephalon and to lateral domains of the hindbrain.

The protein resides in the nucleus. Its function is as follows. Transcriptional repressor. This chain is Forkhead box protein P2, found in Xenopus laevis (African clawed frog).